The chain runs to 252 residues: Phosphomannomutase (252 aa).

Residue Asp-13 is the Nucleophile of the active site. Residues Asp-13 and Asp-15 each coordinate Mg(2+). Asp-15 serves as the catalytic Proton donor/acceptor. Residues Arg-22, Arg-124, Arg-135, Arg-142, Ser-180, and Asp-182 each coordinate alpha-D-mannose 1-phosphate. Mg(2+) contacts are provided by Asp-208, Tyr-220, and Thr-225.

The protein belongs to the eukaryotic PMM family. Homodimer. Mg(2+) serves as cofactor.

It localises to the cytoplasm. The enzyme catalyses alpha-D-mannose 1-phosphate = D-mannose 6-phosphate. The protein operates within nucleotide-sugar biosynthesis; GDP-alpha-D-mannose biosynthesis; alpha-D-mannose 1-phosphate from D-fructose 6-phosphate: step 2/2. Functionally, catalyzes the interconversion of mannose-6-phosphate to mannose-1-phosphate, the precursor for the synthesis of GDP-mannose. GDP-mannose is an essential sugar nucleotide for the synthesis of D-mannose-containing cell wall polysaccharides (galactomannans and glucomannans), glycolipids, glycoproteins and the antioxidant L-ascorbate. Can complement the yeast temperature-sensitive mutant sec53-6. The chain is Phosphomannomutase from Solanum lycopersicum (Tomato).